A 60-amino-acid polypeptide reads, in one-letter code: 5-hydroxytryptamine receptor 2B (60 aa).

Topologically, residues 1-4 (VLCP) are extracellular. A helical transmembrane segment spans residues 5 to 26 (AWLFLDVLFSTASIMHLCAISV). Positions 10 and 15 each coordinate ergotamine. The short motif at 27–29 (DRY) is the DRY motif; important for ligand-induced conformation changes element. The Cytoplasmic segment spans residues 27–46 (DRYIAIKKPIQANQYNSRAT). The chain crosses the membrane as a helical span at residues 47 to 60 (AFIKITVVWLISIG).

This sequence belongs to the G-protein coupled receptor 1 family. In terms of assembly, interacts (via C-terminus) with MPDZ. Detected in aorta, renal artery, jugular vein, vena cava and femoral vein.

It localises to the cell membrane. The protein resides in the synapse. Its subcellular location is the synaptosome. Functionally, G-protein coupled receptor for 5-hydroxytryptamine (serotonin). Also functions as a receptor for various ergot alkaloid derivatives and psychoactive substances. Ligand binding causes a conformation change that triggers signaling via guanine nucleotide-binding proteins (G proteins) and modulates the activity of downstream effectors. HTR2B is coupled to G(q)/G(11) G alpha proteins and activates phospholipase C-beta, releasing diacylglycerol (DAG) and inositol 1,4,5-trisphosphate (IP3) second messengers that modulate the activity of phosphatidylinositol 3-kinase and promote the release of Ca(2+) ions from intracellular stores, respectively. Beta-arrestin family members inhibit signaling via G proteins and mediate activation of alternative signaling pathways. Plays a role in the regulation of dopamine and 5-hydroxytryptamine release, 5-hydroxytryptamine uptake and in the regulation of extracellular dopamine and 5-hydroxytryptamine levels, and thereby affects neural activity. May play a role in the perception of pain. Plays a role in the regulation of behavior, including impulsive behavior. Required for normal proliferation of embryonic cardiac myocytes and normal heart development. Protects cardiomyocytes against apoptosis. Plays a role in the adaptation of pulmonary arteries to chronic hypoxia. Plays a role in vasoconstriction. Required for normal osteoblast function and proliferation, and for maintaining normal bone density. Required for normal proliferation of the interstitial cells of Cajal in the intestine. In Sus scrofa (Pig), this protein is 5-hydroxytryptamine receptor 2B (HTR2B).